Consider the following 234-residue polypeptide: MNKEVEVRNLGIKDYKETWDYQENIFKETVDLKIKNRREGTEIPTRNYFLFVEHPHVYTLGKSGDAENLLISEKELKAKNATFYKINRGGDITYHGPGQIVGYPILDLDNFFTDIHKYLRLLEEAVILTLSEYGLKSERSPGETGVWLDVGTPFARKICAMGVRASRWVTMHGFALNVNADLGYFDNIIPCGIKGKAVTSLNVELGQKEINLEEVQEKLLKHFQELFQAELKYQ.

The region spanning 43-231 is the BPL/LPL catalytic domain; sequence IPTRNYFLFV…HFQELFQAEL (189 aa). Residues 88-95, 160-162, and 173-175 each bind substrate; these read RGGDITYH, AMG, and GFA. The active-site Acyl-thioester intermediate is C191.

It belongs to the LipB family.

The protein localises to the cytoplasm. It carries out the reaction octanoyl-[ACP] + L-lysyl-[protein] = N(6)-octanoyl-L-lysyl-[protein] + holo-[ACP] + H(+). It participates in protein modification; protein lipoylation via endogenous pathway; protein N(6)-(lipoyl)lysine from octanoyl-[acyl-carrier-protein]: step 1/2. Catalyzes the transfer of endogenously produced octanoic acid from octanoyl-acyl-carrier-protein onto the lipoyl domains of lipoate-dependent enzymes. Lipoyl-ACP can also act as a substrate although octanoyl-ACP is likely to be the physiological substrate. The sequence is that of Octanoyltransferase from Christiangramia forsetii (strain DSM 17595 / CGMCC 1.15422 / KT0803) (Gramella forsetii).